The primary structure comprises 221 residues: Vesicle transport v-SNARE 11 (221 aa).

The residue at position 2 (Ser-2) is an N-acetylserine. Residues 2–198 (SDVFDGYERQ…MTRRMNKNKW (197 aa)) are Cytoplasmic-facing. Residues 32 to 93 (EQKKQKLSEI…FKTEVKRITS (62 aa)) adopt a coiled-coil conformation. The helical; Anchor for type IV membrane protein transmembrane segment at 199-219 (TIGAIIIALIAAIFIILYFKL) threads the bilayer. Residues 220–221 (TK) are Vesicular-facing.

The protein belongs to the VTI1 family. Forms SNARE complexes with the t-SNAREs SYP51 and either SYP21 or SYP22 in the PVC, and with a much lower affinity with SYP61 in the TGN. Does not interact with SYP41, SYP42 or VPS45. Binds to EPSIN1. Interacts with SCYL2B. As to expression, expressed in roots, stems, flowers and leaves.

The protein localises to the golgi apparatus. Its subcellular location is the trans-Golgi network membrane. The protein resides in the prevacuolar compartment membrane. It is found in the vacuole membrane. Its function is as follows. Functions as a v-SNARE responsible for targeting AtELP-containing vesicles from the trans-Golgi network (TGN) to the prevacuolar compartment (PVC) and mediates liposome fusion. May be also involved in retrograde traffic to the cis-Golgi. Promotes the formation of vacuolar membrane 'bulbs'. Necessary to deliver proteins to the lytic vacuole, but seems not involved in storage proteins transport. Required for amyloplast sedimentation in the endodermis during shoot gravitropism, which are thus acting as statoliths. Expression in the endodermis is essential for the shoot gravitropic response, whereas expression in other tissues may be responsible for the correct stem and leaf shape. This chain is Vesicle transport v-SNARE 11, found in Arabidopsis thaliana (Mouse-ear cress).